We begin with the raw amino-acid sequence, 249 residues long: Granaticin polyketide synthase putative ketoacyl reductase 2 (249 aa).

Residue 12 to 36 (LVTGSSSGIGQTVAQRLAAEGYRVV) coordinates NAD(+). Ser-144 lines the substrate pocket. Tyr-157 acts as the Proton acceptor in catalysis.

The protein belongs to the short-chain dehydrogenases/reductases (SDR) family.

The protein operates within antibiotic biosynthesis; granaticin biosynthesis. In Streptomyces violaceoruber, this protein is Granaticin polyketide synthase putative ketoacyl reductase 2 (gra-orf6).